The primary structure comprises 487 residues: Protein nucleotidyltransferase YdiU (487 aa).

The ATP site is built by G90, G92, R93, K113, D125, G126, R176, and R183. D252 (proton acceptor) is an active-site residue. Mg(2+)-binding residues include N253 and D262. D262 contacts ATP.

The protein belongs to the SELO family. Mg(2+) is required as a cofactor. Mn(2+) serves as cofactor.

It carries out the reaction L-seryl-[protein] + ATP = 3-O-(5'-adenylyl)-L-seryl-[protein] + diphosphate. The enzyme catalyses L-threonyl-[protein] + ATP = 3-O-(5'-adenylyl)-L-threonyl-[protein] + diphosphate. It catalyses the reaction L-tyrosyl-[protein] + ATP = O-(5'-adenylyl)-L-tyrosyl-[protein] + diphosphate. The catalysed reaction is L-histidyl-[protein] + UTP = N(tele)-(5'-uridylyl)-L-histidyl-[protein] + diphosphate. It carries out the reaction L-seryl-[protein] + UTP = O-(5'-uridylyl)-L-seryl-[protein] + diphosphate. The enzyme catalyses L-tyrosyl-[protein] + UTP = O-(5'-uridylyl)-L-tyrosyl-[protein] + diphosphate. Its function is as follows. Nucleotidyltransferase involved in the post-translational modification of proteins. It can catalyze the addition of adenosine monophosphate (AMP) or uridine monophosphate (UMP) to a protein, resulting in modifications known as AMPylation and UMPylation. The sequence is that of Protein nucleotidyltransferase YdiU from Pseudomonas syringae pv. syringae (strain B728a).